Here is a 404-residue protein sequence, read N- to C-terminus: Beta-ketoacyl-[acyl-carrier-protein] synthase III, chloroplastic (404 aa).

Residues 1–43 constitute a chloroplast transit peptide; sequence MANASGFFTHPSIPNLRSRIHVPVRVSGSGFCVSNRFSKRVLC. Active-site residues include C179, H330, and N360.

This sequence belongs to the thiolase-like superfamily. FabH family.

The protein resides in the plastid. It is found in the chloroplast. It carries out the reaction malonyl-[ACP] + acetyl-CoA + H(+) = 3-oxobutanoyl-[ACP] + CO2 + CoA. Its pathway is lipid metabolism; fatty acid biosynthesis. Its function is as follows. Catalyzes the condensation reaction of fatty acid synthesis by the addition to an acyl acceptor of two carbons from malonyl-ACP. KAS III catalyzes the first condensation reaction which initiates fatty acid synthesis and may therefore play a role in governing the total rate of fatty acid production. Possesses both acetoacetyl-ACP synthase and acetyl transacylase activities. The sequence is that of Beta-ketoacyl-[acyl-carrier-protein] synthase III, chloroplastic from Arabidopsis thaliana (Mouse-ear cress).